A 524-amino-acid polypeptide reads, in one-letter code: Sterol O-acyltransferase 2 (524 aa).

The segment at 1–31 (MEPKAPQLRRRERQGEEQENGACGEGNTRTH) is disordered. At 1 to 118 (MEPKAPQLRR…LDELMGVQHF (118 aa)) the chain is on the cytoplasmic side. Position 117 (H117) interacts with cholesterol. A helical membrane pass occupies residues 119–140 (RTIYHMFIAGLCVLIISTLAID). The Lumenal segment spans residues 141-160 (FIDEGRLMLEFDLLLFSFGQ). Residues 161-186 (LPLALMMWVPMFLSTLLLPYQTLRLW) form a helical membrane-spanning segment. Topologically, residues 187–198 (ARPRSGGAWTLG) are cytoplasmic. Residues 199–222 (ASLGCVLLAAHAAVLCVLPVHVSV) form a helical membrane-spanning segment. Residues 223–230 (KHELPPAS) are Lumenal-facing. The chain crosses the membrane as a helical span at residues 231–254 (RCVLVFEQVRFLMKSYSFLRETVP). Over 255-295 (GIFCVRGGKGICTPSFSSYLYFLFCPTLIYRETYPRTPSIR) the chain is Cytoplasmic. Position 279 is a cysteine sulfenic acid (-SOH); alternate (C279). C279 participates in a covalent cross-link: Glycyl cysteine thioester (Cys-Gly) (interchain with G-Cter in ubiquitin); alternate. Residues 296-328 (WNYVAKNFAQALGCLLYACFILGRLCVPVFANM) traverse the membrane as a helical segment. The Lumenal segment spans residues 329–345 (SREPFSTRALLLSILHA). Residues 346–371 (TGPGIFMLLLIFFAFLHCWLNAFAEM) form a helical membrane-spanning segment. The Cytoplasmic segment spans residues 372–419 (LRFGDRMFYRDWWNSTSFSNYYRTWNVVVHDWLYSYVYQDGLWLLGRQ). The FYXDWWN motif motif lies at 379–385 (FYRDWWN). Positions 391, 394, 397, 401, 409, and 432 each coordinate an acyl-CoA. Residues 420-444 (GRGAAMLGVFLVSALVHEYIFCFVL) traverse the membrane as a helical segment. H436 is a catalytic residue. Over 445–450 (GFFYPV) the chain is Lumenal. The helical transmembrane segment at 451-466 (MLILFLVVGGLLNFTM) threads the bilayer. The Cytoplasmic portion of the chain corresponds to 467 to 472 (NDRHTG). The helical transmembrane segment at 473–504 (PAWNILMWTFLFLGQGIQVSLYCQEWYARRHC) threads the bilayer. Residues 505–524 (PLPQPTFWELVTPRSWSCHP) are Lumenal-facing.

This sequence belongs to the membrane-bound acyltransferase family. Sterol o-acyltransferase subfamily. In terms of assembly, may form homo- or heterodimers. Interacts with INSIG1; the interaction is direct and promotes association with AMFR/gp78. In terms of processing, polyubiquitinated by AMFR/gp78 at Cys-279, leading to its degradation when the lipid levels are low. Association with AMFR/gp78 is mediated via interaction with INSIG1. High concentration of cholesterol and fatty acid results in Cys-279 oxidation, preventing ubiquitination at the same site, resulting in protein stabilization. Oxidized at Cys-279: high concentration of cholesterol and fatty acid induce reactive oxygen species, which oxidizes Cys-279, preventing ubiquitination at the same site, and resulting in protein stabilization.

The protein resides in the endoplasmic reticulum membrane. It catalyses the reaction a sterol + a long-chain fatty acyl-CoA = a long-chain 3-hydroxysterol ester + CoA. The enzyme catalyses cholesterol + an acyl-CoA = a cholesterol ester + CoA. It carries out the reaction cholesterol + (9Z)-octadecenoyl-CoA = cholesteryl (9Z-octadecenoate) + CoA. The catalysed reaction is (5Z,8Z,11Z,14Z,17Z)-eicosapentaenoyl-CoA + cholesterol = (5Z,8Z,11Z,14Z,17Z-eicosapentaenoyl)-cholesterol + CoA. It catalyses the reaction (9Z,12Z,15Z)-octadecatrienoyl-CoA + cholesterol = (9Z,12Z,15Z-octadecatrienoyl)-cholesterol + CoA. The enzyme catalyses (5Z,8Z,11Z,14Z)-eicosatetraenoyl-CoA + cholesterol = cholesteryl (5Z,8Z,11Z,14Z)-eicosatetraenoate + CoA. Functionally, catalyzes the formation of fatty acid-cholesterol esters, which are less soluble in membranes than cholesterol. Plays a role in lipoprotein assembly and dietary cholesterol absorption. Utilizes oleoyl-CoA ((9Z)-octadecenoyl-CoA) and linolenoyl-CoA ((9Z,12Z,15Z)-octadecatrienoyl-CoA) as substrates. May provide cholesteryl esters for lipoprotein secretion from hepatocytes and intestinal mucosa. This chain is Sterol O-acyltransferase 2, found in Rattus norvegicus (Rat).